The following is a 201-amino-acid chain: Pectinesterase inhibitor 7 (201 aa).

The first 24 residues, M1–A24, serve as a signal peptide directing secretion. Intrachain disulfides connect C42/C51 and C108/C159.

Belongs to the PMEI family. In terms of assembly, binds reversibly to PME3 to inhibit its activity; the stability of the PME3-PMEI7 complex and the inhibition of the pectin methylesterase (PME) activity is pH-dependent, based on protonation status of amino-acids at the complex interface. In terms of tissue distribution, accumulates in etiolated hypocotyls (at protein level).

Its subcellular location is the secreted. It is found in the extracellular space. It localises to the apoplast. The protein localises to the cell wall. Its function is as follows. Pectin methylesterase (PME) inhibitor that can target PME3 in a pH-dependent manner, mainly in slightly acidic conditions (pH 6.0 and 5.0) but not at pH 7.0; this processus relies on changes in the protonation of amino acids involved in intermolecular and intramolecular interactions. Regulates homogalacturonan methylesterification during plant development. This chain is Pectinesterase inhibitor 7, found in Arabidopsis thaliana (Mouse-ear cress).